The sequence spans 227 residues: 7-cyano-7-deazaguanine synthase (227 aa).

16-26 (FSGGQDSTTCL) contributes to the ATP binding site. Zn(2+) is bound by residues Cys-194, Cys-202, Cys-205, and Cys-208.

This sequence belongs to the QueC family. Zn(2+) serves as cofactor.

It catalyses the reaction 7-carboxy-7-deazaguanine + NH4(+) + ATP = 7-cyano-7-deazaguanine + ADP + phosphate + H2O + H(+). Its pathway is purine metabolism; 7-cyano-7-deazaguanine biosynthesis. In terms of biological role, catalyzes the ATP-dependent conversion of 7-carboxy-7-deazaguanine (CDG) to 7-cyano-7-deazaguanine (preQ(0)). The sequence is that of 7-cyano-7-deazaguanine synthase from Haemophilus influenzae (strain PittEE).